The following is a 2552-amino-acid chain: Probable polyketide synthase 40 (2552 aa).

Residues 13-443 (CNKVAIIGIG…GSNCCLIVSS (431 aa)) form the Ketosynthase family 3 (KS3) domain. Active-site for beta-ketoacyl synthase activity residues include cysteine 179, histidine 320, and histidine 362. An acyl/malonyl transferase region spans residues 629 to 662 (GIKPSIIVGHSLGEISSSYCSGMIDLDTFCYLIY). The active-site For acyl/malonyl transferase activity is serine 639. The segment at 928-1063 (INHLGISNSN…ANFQLFSRGQ (136 aa)) is N-terminal hotdog fold. In terms of domain architecture, PKS/mFAS DH spans 928–1235 (INHLGISNSN…FKSTTKIKDS (308 aa)). Catalysis depends on histidine 962, which acts as the Proton acceptor; for dehydratase activity. Residues 1087–1235 (NLTKLSKQEL…FKSTTKIKDS (149 aa)) are C-terminal hotdog fold. The Proton donor; for dehydratase activity role is filled by aspartate 1149. A Carrier domain is found at 2467–2546 (DNVELTVDQL…SFIQLVKNSI (80 aa)). Position 2505 is an O-(pantetheine 4'-phosphoryl)serine (serine 2505).

Pantetheine 4'-phosphate serves as cofactor.

Probable polyketide synthase. This Dictyostelium discoideum (Social amoeba) protein is Probable polyketide synthase 40 (pks40).